The following is a 124-amino-acid chain: Holo-[acyl-carrier-protein] synthase (124 aa).

2 residues coordinate Mg(2+): Asp-8 and Glu-56.

It belongs to the P-Pant transferase superfamily. AcpS family. Requires Mg(2+) as cofactor.

Its subcellular location is the cytoplasm. The enzyme catalyses apo-[ACP] + CoA = holo-[ACP] + adenosine 3',5'-bisphosphate + H(+). Functionally, transfers the 4'-phosphopantetheine moiety from coenzyme A to a Ser of acyl-carrier-protein. The chain is Holo-[acyl-carrier-protein] synthase from Clostridium acetobutylicum (strain ATCC 824 / DSM 792 / JCM 1419 / IAM 19013 / LMG 5710 / NBRC 13948 / NRRL B-527 / VKM B-1787 / 2291 / W).